The following is a 367-amino-acid chain: C-C chemokine receptor type 6 (367 aa).

Residues 1 to 39 (MNSTESYFGTDDYDNTEYYSIPPDHGPCSLEEVRNFTKV) lie on the Extracellular side of the membrane. N-linked (GlcNAc...) asparagine glycans are attached at residues Asn2 and Asn35. A helical membrane pass occupies residues 40–66 (FVPIAYSLICVFGLLGNIMVVMTFAFY). The Cytoplasmic segment spans residues 67–75 (KKARSMTDV). The chain crosses the membrane as a helical span at residues 76-96 (YLLNMAITDILFVLTLPFWAV). Residues 97–111 (THATNTWVFSDALCK) lie on the Extracellular side of the membrane. A disulfide bridge links Cys110 with Cys189. Residues 112 to 133 (LMKGTYAVNFNCGMLLLACISM) traverse the membrane as a helical segment. Over 134 to 151 (DRYIAIVQATKSFRVRSR) the chain is Cytoplasmic. Residues 152–172 (TLTHSKVICVAVWFISIIISS) form a helical membrane-spanning segment. At 173–203 (PTFIFNKKYELQDRDVCEPRYRSVSEPITWK) the chain is on the extracellular side. The helical transmembrane segment at 204 to 230 (LLGMGLELFFGFFTPLLFMVFCYLFII) threads the bilayer. Topologically, residues 231–246 (KTLVQAQNSKRHRAIR) are cytoplasmic. Residues 247–271 (VVIAVVLVFLACQIPHNMVLLVTAV) traverse the membrane as a helical segment. The Extracellular segment spans residues 272–295 (NTGKVGRSCSTEKVLAYTRNVAEV). A helical membrane pass occupies residues 296 to 313 (LAFLHCCLNPVLYAFIGQ). The Cytoplasmic portion of the chain corresponds to 314–367 (KFRNYFMKIMKDVWCMRRKNKMPGFLCARVYSESYISRQTSETVENDNASSFTM).

It belongs to the G-protein coupled receptor 1 family. In terms of tissue distribution, sperm. Mainly localized in the principal piece and neck region of the tail but is also found in the acrosomal region in a small percentage of sperm cells. Expressed in natural regulatory T cells (nTregs) and a subset of early thymocyte progenitor double-negative 1 (DN1) cells. Expressed in memory B cells. Expressed by IL17 producing helper T-cells (Th17), type 1 effector cells (Th1), type 2 effector cells (Th2) and regulatory T-cells (Treg) (at protein level). Expressed by Th17 cells in spleen, Peyers patches, and lamina propria of small and large intestine. Highly expressed in testis, lung, colon, and dendritic cells.

It is found in the cell membrane. The protein resides in the cell surface. Its function is as follows. Receptor for the C-C type chemokine CCL20. Binds to CCL20 and subsequently transduces a signal by increasing the intracellular calcium ion levels. Although CCL20 is its major ligand it can also act as a receptor for non-chemokine ligands such as beta-defensins. Binds to defensin DEFB1 leading to increase in intracellular calcium ions and cAMP levels. Its binding to DEFB1 is essential for the function of DEFB1 in regulating sperm motility and bactericidal activity. Binds to defensins DEFB4 and DEFB4A/B and mediates their chemotactic effects. The ligand-receptor pair CCL20-CCR6 is responsible for the chemotaxis of dendritic cells (DC), effector/memory T-cells and B-cells and plays an important role at skin and mucosal surfaces under homeostatic and inflammatory conditions, as well as in pathology, including cancer and various autoimmune diseases. CCR6-mediated signals are essential for immune responses to microbes in the intestinal mucosa and in the modulation of inflammatory responses initiated by tissue insult and trauma. CCR6 is essential for the recruitment of both the pro-inflammatory IL17 producing helper T-cells (Th17) and the regulatory T-cells (Treg) to sites of inflammation. Required for the normal migration of Th17 cells in Peyers patches and other related tissue sites of the intestine and plays a role in regulating effector T-cell balance and distribution in inflamed intestine. Plays an important role in the coordination of early thymocyte precursor migration events important for normal subsequent thymocyte precursor development, but is not required for the formation of normal thymic natural regulatory T-cells (nTregs). Required for optimal differentiation of DN2 and DN3 thymocyte precursors. Essential for B-cell localization in the subepithelial dome of Peyers-patches and for efficient B-cell isotype switching to IgA in the Peyers-patches. Essential for appropriate anatomical distribution of memory B-cells in the spleen and for the secondary recall response of memory B-cells. Positively regulates sperm motility and chemotaxis via its binding to CCL20. The polypeptide is C-C chemokine receptor type 6 (Ccr6) (Mus musculus (Mouse)).